The sequence spans 687 residues: Acetolactate synthase catalytic subunit, mitochondrial (687 aa).

The transit peptide at methionine 1 to valine 90 directs the protein to the mitochondrion. Positions tyrosine 43–serine 52 are enriched in low complexity. Positions tyrosine 43–glutamine 68 are disordered. Thiamine diphosphate is bound at residue glutamate 139. FAD contacts are provided by residues arginine 241, histidine 355–arginine 376, and glutamate 407–aspartate 426. Positions glutamine 499 to glutamate 579 are thiamine pyrophosphate binding. Aspartate 550, asparagine 577, and glutamate 579 together coordinate Mg(2+).

This sequence belongs to the TPP enzyme family. In terms of assembly, homodimer. The acetolactate synthase complex contains the catalytic subunit ILV2 and the regulatory small subunit ILV6. Mg(2+) serves as cofactor. The cofactor is thiamine diphosphate.

It is found in the mitochondrion. It carries out the reaction 2 pyruvate + H(+) = (2S)-2-acetolactate + CO2. The catalysed reaction is 2-oxobutanoate + pyruvate + H(+) = (S)-2-ethyl-2-hydroxy-3-oxobutanoate + CO2. The protein operates within amino-acid biosynthesis; L-isoleucine biosynthesis; L-isoleucine from 2-oxobutanoate: step 1/4. Its pathway is amino-acid biosynthesis; L-valine biosynthesis; L-valine from pyruvate: step 1/4. Its activity is regulated as follows. The regulatory subunit ILV6 stimulates enzymatic activity seven- to tenfold and confers sensitivity to inhibition by valine and activation by ATP. Functionally, catalytic subunit of mitochondrial acetolactate synthase, which catalyzes the first of a series of common steps in the biosynthesis of the branched-chain amino acids. Catalyzes the irreversible decarboxylation of pyruvate to a bound hydroxyethyl group that then condenses with either a second pyruvate molecule to form 2-acetolactate (AL) or with 2-ketobutyrate to form 2-aceto-2-hydroxybutyrate (AHB). The first product is the precursor for valine and leucine biosynthesis, while the second leads to isoleucine. This chain is Acetolactate synthase catalytic subunit, mitochondrial (ILV2), found in Saccharomyces cerevisiae (strain ATCC 204508 / S288c) (Baker's yeast).